A 260-amino-acid polypeptide reads, in one-letter code: Pyridoxine 5'-phosphate synthase (260 aa).

Asparagine 15 lines the 3-amino-2-oxopropyl phosphate pocket. 17–18 (DH) lines the 1-deoxy-D-xylulose 5-phosphate pocket. Arginine 26 is a 3-amino-2-oxopropyl phosphate binding site. Residue histidine 51 is the Proton acceptor of the active site. Residues arginine 53 and histidine 58 each coordinate 1-deoxy-D-xylulose 5-phosphate. The active-site Proton acceptor is the glutamate 78. 1-deoxy-D-xylulose 5-phosphate is bound at residue threonine 108. The active-site Proton donor is histidine 199. 3-amino-2-oxopropyl phosphate is bound by residues glycine 200 and 221 to 222 (GH).

The protein belongs to the PNP synthase family. As to quaternary structure, homooctamer; tetramer of dimers.

The protein resides in the cytoplasm. The enzyme catalyses 3-amino-2-oxopropyl phosphate + 1-deoxy-D-xylulose 5-phosphate = pyridoxine 5'-phosphate + phosphate + 2 H2O + H(+). It functions in the pathway cofactor biosynthesis; pyridoxine 5'-phosphate biosynthesis; pyridoxine 5'-phosphate from D-erythrose 4-phosphate: step 5/5. Its function is as follows. Catalyzes the complicated ring closure reaction between the two acyclic compounds 1-deoxy-D-xylulose-5-phosphate (DXP) and 3-amino-2-oxopropyl phosphate (1-amino-acetone-3-phosphate or AAP) to form pyridoxine 5'-phosphate (PNP) and inorganic phosphate. This is Pyridoxine 5'-phosphate synthase from Cupriavidus necator (strain ATCC 17699 / DSM 428 / KCTC 22496 / NCIMB 10442 / H16 / Stanier 337) (Ralstonia eutropha).